A 230-amino-acid polypeptide reads, in one-letter code: Metaxin-2 homolog (230 aa).

It belongs to the metaxin family. Associates with the mitochondrial contact site and cristae organizing system (MICOS) complex (also known as MINOS or MitOS complex).

It localises to the mitochondrion outer membrane. In terms of biological role, involved in transport of proteins into the mitochondrion. This Caenorhabditis elegans protein is Metaxin-2 homolog (mtx-2).